The chain runs to 333 residues: UPF0284 protein TGAM_0534 (333 aa).

The protein belongs to the UPF0284 family.

This Thermococcus gammatolerans (strain DSM 15229 / JCM 11827 / EJ3) protein is UPF0284 protein TGAM_0534.